A 314-amino-acid polypeptide reads, in one-letter code: E3 ubiquitin-protein ligase CHIP (314 aa).

Over residues 1–11 (MKGKEEREREG) the composition is skewed to basic and acidic residues. Residues 1–47 (MKGKEEREREGGGGAVGPGAAGPGAGGGSPEKSHSAQEHKEQGNRLF) are disordered. Gly residues predominate over residues 12–29 (GGGAVGPGAAGPGAGGGS). Residues 31–43 (EKSHSAQEHKEQG) show a composition bias toward basic and acidic residues. 3 TPR repeats span residues 36–69 (AQEH…NPLV), 70–103 (AVYY…DGQS), and 105–137 (KAHF…AKEQ). Positions 237-311 (DIPDYLCGKI…DAFISENGWV (75 aa)) constitute a U-box domain.

As to quaternary structure, homodimer.

Its subcellular location is the cytoplasm. It is found in the nucleus. The protein resides in the mitochondrion. The enzyme catalyses S-ubiquitinyl-[E2 ubiquitin-conjugating enzyme]-L-cysteine + [acceptor protein]-L-lysine = [E2 ubiquitin-conjugating enzyme]-L-cysteine + N(6)-ubiquitinyl-[acceptor protein]-L-lysine.. Its function is as follows. E3 ubiquitin-protein ligase which targets misfolded chaperone substrates towards proteasomal degradation. Collaborates with ATXN3 in the degradation of misfolded chaperone substrates: ATXN3 restricting the length of ubiquitin chain attached to STUB1/CHIP substrates and preventing further chain extension. The sequence is that of E3 ubiquitin-protein ligase CHIP from Gallus gallus (Chicken).